Reading from the N-terminus, the 1355-residue chain is NACHT, LRR and PYD domains-containing protein 1 homolog (1355 aa).

The NACHT domain maps to 257-458 (KTVILCGDSG…SVPLLCWMVC (202 aa)). 263-270 (GDSGRGKS) lines the ATP pocket. Positions 977–1109 (DSDQWVQVEP…FHAKILQPMF (133 aa)) are ZU5. Residues 977 to 1252 (DSDQWVQVEP…NKTESDLFQS (276 aa)) form the FIIND domain. The interval 1110–1252 (SPKTVLVKLG…NKTESDLFQS (143 aa)) is UPA. A CARD domain is found at 1278–1354 (LIKSVENVDT…NLLNHLPSSD (77 aa)).

This sequence belongs to the NLRP family. Interacts with the C-terminal part of nlrp1 (NACHT, LRR and PYD domains-containing protein 1, C-terminus) in absence of pathogens and other damage-associated signals. In terms of assembly, interacts with the N-terminal part of nlrp1 (NACHT, LRR and PYD domains-containing protein 1, N-terminus) in absence of pathogens and other damage-associated signals. Homomultimer; forms the nlrp1 inflammasome polymeric complex, a filament composed of homopolymers of this form in response to pathogens and other damage-associated signals. The nlrp1 inflammasome polymeric complex associates with pycard/asc. Interacts (via CARD domain) with pycard/asc (via CARD domain); leading to pro-inflammatory caspases (caspa and/or caspb) recruitment. Pro-caspase-a and pro-caspase-b filament formation increases local enzyme concentration, resulting in trans-autocleavage and activation. Active caspa and caspb then processes il1b and il18 precursors, leading to the release of mature cytokines in the extracellular milieu and inflammatory response. Autocatalytically cleaved. Autocatalytic cleavage in FIIND region occurs constitutively, prior to activation signals, and is required for inflammasome activity (IL1B release), possibly by facilitating pro-inflammatory caspases (caspa and/or caspb) binding. Both N- and C-terminal parts remain associated non-covalently. In terms of processing, ubiquitinated in response to pathogen-associated signals, leading to its degradation by the proteasome and subsequent release of the cleaved C-terminal part of the protein (NACHT, LRR and PYD domains-containing protein 1, C-terminus), which polymerizes and forms the nlrp1 inflammasome. Expressed in adult spleen, head kidney, gill and skin and also in the embryo.

It is found in the cytoplasm. Its subcellular location is the inflammasome. With respect to regulation, nlrp1 inflammasome is activated by pathogens and other damage-associated signals: activation promotes ubiquitination and degradation of the N-terminal part, releasing the cleaved C-terminal part of the protein (NACHT, LRR and PYD domains-containing protein 1, C-terminus), which polymerizes and forms the nlrp1 inflammasome. In terms of biological role, acts as the sensor component of the nlrp1 inflammasome, which mediates inflammasome activation in response to various pathogen-associated signals, leading to subsequent pyroptosis. Inflammasomes are supramolecular complexes that assemble in the cytosol in response to pathogens and other damage-associated signals and play critical roles in innate immunity and inflammation. Acts as a recognition receptor (PRR): recognizes specific pathogens and other damage-associated signals, and mediates the formation of the inflammasome polymeric complex. In response to pathogen-associated signals, the N-terminal part of nlrp1 is degraded by the proteasome, releasing the cleaved C-terminal part of the protein (NACHT, LRR and PYD domains-containing protein 1, C-terminus), which polymerizes to initiate the formation of the inflammasome complex: the inflammasome recruits and activate pro-inflammatory caspases (caspa and/or caspb), leading to pyroptosis. Functionally, constitutes the precursor of the nlrp1 inflammasome, which mediates autoproteolytic processing within the FIIND domain to generate the N-terminal and C-terminal parts, which are associated non-covalently in absence of pathogens and other damage-associated signals. Its function is as follows. Regulatory part that prevents formation of the nlrp1 inflammasome: in absence of pathogens and other damage-associated signals, interacts with the C-terminal part of nlrp1 (NACHT, LRR and PYD domains-containing protein 1, C-terminus), preventing activation of the nlrp1 inflammasome. In response to pathogen-associated signals, this part is ubiquitinated and degraded by the proteasome, releasing the cleaved C-terminal part of the protein, which polymerizes and forms the nlrp1 inflammasome. Constitutes the active part of the nlrp1 inflammasome. In absence of pathogens and other damage-associated signals, interacts with the N-terminal part of nlrp1 (NACHT, LRR and PYD domains-containing protein 1, N-terminus), preventing activation of the nlrp1 inflammasome. In response to pathogen-associated signals, the N-terminal part of nlrp1 is degraded by the proteasome, releasing this form, which polymerizes to form the nlrp1 inflammasome complex: the nlrp1 inflammasome complex then directly recruits and activates pro-inflammatory caspases (caspa and/or caspb) activation, leading to subsequent pyroptosis. This Danio rerio (Zebrafish) protein is NACHT, LRR and PYD domains-containing protein 1 homolog.